The following is a 315-amino-acid chain: MNIFLANPRGFCAGVDRAINIVKNAIEIYGPPIYVYNEVVHNKYVVNSLKKIGSIFVKKICDVPEKSILIFSAHGVSKSILKEANKRKLIIFDATCPLVSKVHHEIKRASKLRSEVIIIGHKNHPEIIGTIGQYNNPNKKVFVIQSIEEICKLKIKDPNNLFYFTQTTLSVDDTNKIIFAIKKKYPYIIEPRKKDICYATENRQKSIKKIIKLVDIIFIIGSKNSSNSNRLFEIANKSGKKSYLIDTYKEIKKSWLNGVNNIGITAGASAPEILVQQVVNYLKIFYKNSVNIYQVDGDIEKTKFMIPKKLILKIK.

C12 serves as a coordination point for [4Fe-4S] cluster. (2E)-4-hydroxy-3-methylbut-2-enyl diphosphate is bound by residues H41 and H74. Positions 41 and 74 each coordinate dimethylallyl diphosphate. Isopentenyl diphosphate contacts are provided by H41 and H74. Residue C96 coordinates [4Fe-4S] cluster. H124 provides a ligand contact to (2E)-4-hydroxy-3-methylbut-2-enyl diphosphate. Residue H124 coordinates dimethylallyl diphosphate. Residue H124 coordinates isopentenyl diphosphate. E126 (proton donor) is an active-site residue. T167 lines the (2E)-4-hydroxy-3-methylbut-2-enyl diphosphate pocket. C197 serves as a coordination point for [4Fe-4S] cluster. (2E)-4-hydroxy-3-methylbut-2-enyl diphosphate contacts are provided by S225, S226, N227, and S269. S225, S226, N227, and S269 together coordinate dimethylallyl diphosphate. Isopentenyl diphosphate-binding residues include S225, S226, N227, and S269.

It belongs to the IspH family. Homodimer. [4Fe-4S] cluster is required as a cofactor.

The enzyme catalyses isopentenyl diphosphate + 2 oxidized [2Fe-2S]-[ferredoxin] + H2O = (2E)-4-hydroxy-3-methylbut-2-enyl diphosphate + 2 reduced [2Fe-2S]-[ferredoxin] + 2 H(+). The catalysed reaction is dimethylallyl diphosphate + 2 oxidized [2Fe-2S]-[ferredoxin] + H2O = (2E)-4-hydroxy-3-methylbut-2-enyl diphosphate + 2 reduced [2Fe-2S]-[ferredoxin] + 2 H(+). It participates in isoprenoid biosynthesis; dimethylallyl diphosphate biosynthesis; dimethylallyl diphosphate from (2E)-4-hydroxy-3-methylbutenyl diphosphate: step 1/1. It functions in the pathway isoprenoid biosynthesis; isopentenyl diphosphate biosynthesis via DXP pathway; isopentenyl diphosphate from 1-deoxy-D-xylulose 5-phosphate: step 6/6. In terms of biological role, catalyzes the conversion of 1-hydroxy-2-methyl-2-(E)-butenyl 4-diphosphate (HMBPP) into a mixture of isopentenyl diphosphate (IPP) and dimethylallyl diphosphate (DMAPP). Acts in the terminal step of the DOXP/MEP pathway for isoprenoid precursor biosynthesis. This Wigglesworthia glossinidia brevipalpis protein is 4-hydroxy-3-methylbut-2-enyl diphosphate reductase.